Here is a 273-residue protein sequence, read N- to C-terminus: 2,3,4,5-tetrahydropyridine-2,6-dicarboxylate N-succinyltransferase (273 aa).

Residues arginine 104 and aspartate 141 each contribute to the substrate site.

The protein belongs to the transferase hexapeptide repeat family. As to quaternary structure, homotrimer.

The protein resides in the cytoplasm. It catalyses the reaction (S)-2,3,4,5-tetrahydrodipicolinate + succinyl-CoA + H2O = (S)-2-succinylamino-6-oxoheptanedioate + CoA. The protein operates within amino-acid biosynthesis; L-lysine biosynthesis via DAP pathway; LL-2,6-diaminopimelate from (S)-tetrahydrodipicolinate (succinylase route): step 1/3. The protein is 2,3,4,5-tetrahydropyridine-2,6-dicarboxylate N-succinyltransferase of Nitrosospira multiformis (strain ATCC 25196 / NCIMB 11849 / C 71).